Here is a 93-residue protein sequence, read N- to C-terminus: Precursor of CEP13 (93 aa).

An N-terminal signal peptide occupies residues 1–27 (MARPRISISMICLLILIVGFVLQSSQA). A propeptide spanning residues 28–78 (RKVLVPYGTSKGLFLSALPKGNVPPSGPSDKGHTSPPDDTDQRMVPENSPE) is cleaved from the precursor. The disordered stretch occupies residues 45–93 (LPKGNVPPSGPSDKGHTSPPDDTDQRMVPENSPEIYRRLESVPSPGVGH). A hydroxyproline mark is found at P87 and P89.

Belongs to the C-terminally encoded plant signaling peptide (CEP) family. Interacts with CEP receptors (e.g. CEPR1 and CEPR2). Post-translationally, the mature small signaling peptide is generated by proteolytic processing of the longer precursor.

The protein localises to the secreted. It is found in the extracellular space. The protein resides in the apoplast. Extracellular signaling peptide that may regulate primary root growth rate and systemic nitrogen (N)-demand signaling. The polypeptide is Precursor of CEP13 (Arabidopsis thaliana (Mouse-ear cress)).